The sequence spans 257 residues: Ribonuclease PH (257 aa).

Residues arginine 86 and 124 to 126 (GTR) each bind phosphate.

The protein belongs to the RNase PH family. In terms of assembly, homohexameric ring arranged as a trimer of dimers.

It catalyses the reaction tRNA(n+1) + phosphate = tRNA(n) + a ribonucleoside 5'-diphosphate. Its function is as follows. Phosphorolytic 3'-5' exoribonuclease that plays an important role in tRNA 3'-end maturation. Removes nucleotide residues following the 3'-CCA terminus of tRNAs; can also add nucleotides to the ends of RNA molecules by using nucleoside diphosphates as substrates, but this may not be physiologically important. Probably plays a role in initiation of 16S rRNA degradation (leading to ribosome degradation) during starvation. The chain is Ribonuclease PH from Sulfurihydrogenibium sp. (strain YO3AOP1).